Consider the following 70-residue polypeptide: Small ribosomal subunit protein bS18 (70 aa).

It belongs to the bacterial ribosomal protein bS18 family. Part of the 30S ribosomal subunit. Forms a tight heterodimer with protein bS6.

Its function is as follows. Binds as a heterodimer with protein bS6 to the central domain of the 16S rRNA, where it helps stabilize the platform of the 30S subunit. The protein is Small ribosomal subunit protein bS18 of Salinibacter ruber (strain DSM 13855 / M31).